The following is a 115-amino-acid chain: Large ribosomal subunit protein uL22 (115 aa).

It belongs to the universal ribosomal protein uL22 family. As to quaternary structure, part of the 50S ribosomal subunit.

In terms of biological role, this protein binds specifically to 23S rRNA; its binding is stimulated by other ribosomal proteins, e.g. L4, L17, and L20. It is important during the early stages of 50S assembly. It makes multiple contacts with different domains of the 23S rRNA in the assembled 50S subunit and ribosome. Its function is as follows. The globular domain of the protein is located near the polypeptide exit tunnel on the outside of the subunit, while an extended beta-hairpin is found that lines the wall of the exit tunnel in the center of the 70S ribosome. This is Large ribosomal subunit protein uL22 from Coxiella burnetii (strain CbuG_Q212) (Coxiella burnetii (strain Q212)).